We begin with the raw amino-acid sequence, 263 residues long: Cytochrome c oxidase subunit 3 (263 aa).

Helical transmembrane passes span 7–27, 44–64, 78–98, 120–140, 145–165, 191–211, and 241–261; these read ITVL…KAHL, FSVG…VYSI, GMLS…WGIL, LILT…CLQF, GMSL…ECFA, VTGL…IYFI, and ITIL…YFFY.

Belongs to the cytochrome c oxidase subunit 3 family. In terms of assembly, component of the cytochrome c oxidase (complex IV, CIV), a multisubunit enzyme composed of a catalytic core of 3 subunits and several supernumerary subunits. The complex exists as a monomer or a dimer and forms supercomplexes (SCs) in the inner mitochondrial membrane with ubiquinol-cytochrome c oxidoreductase (cytochrome b-c1 complex, complex III, CIII).

The protein resides in the mitochondrion inner membrane. It carries out the reaction 4 Fe(II)-[cytochrome c] + O2 + 8 H(+)(in) = 4 Fe(III)-[cytochrome c] + 2 H2O + 4 H(+)(out). In terms of biological role, component of the cytochrome c oxidase, the last enzyme in the mitochondrial electron transport chain which drives oxidative phosphorylation. The respiratory chain contains 3 multisubunit complexes succinate dehydrogenase (complex II, CII), ubiquinol-cytochrome c oxidoreductase (cytochrome b-c1 complex, complex III, CIII) and cytochrome c oxidase (complex IV, CIV), that cooperate to transfer electrons derived from NADH and succinate to molecular oxygen, creating an electrochemical gradient over the inner membrane that drives transmembrane transport and the ATP synthase. Cytochrome c oxidase is the component of the respiratory chain that catalyzes the reduction of oxygen to water. Electrons originating from reduced cytochrome c in the intermembrane space (IMS) are transferred via the dinuclear copper A center (CU(A)) of subunit 2 and heme A of subunit 1 to the active site in subunit 1, a binuclear center (BNC) formed by heme A3 and copper B (CU(B)). The BNC reduces molecular oxygen to 2 water molecules using 4 electrons from cytochrome c in the IMS and 4 protons from the mitochondrial matrix. The polypeptide is Cytochrome c oxidase subunit 3 (COIII) (Plasmodium vivax).